Reading from the N-terminus, the 826-residue chain is Lon protease (826 aa).

Residues 1 to 20 show a composition bias toward basic and acidic residues; the sequence is MSEEELNNRDTESKQEHDEN. The segment at 1 to 27 is disordered; sequence MSEEELNNRDTESKQEHDENNSNFEAG. Positions 33 to 231 constitute a Lon N-terminal domain; sequence LPVLPLREVI…KVHALLEKEL (199 aa). Position 384 to 391 (384 to 391) interacts with ATP; that stretch reads GPPGVGKT. Residues 620 to 801 form the Lon proteolytic domain; that stretch reads ENLVGMTTGL…SEALTFTLAE (182 aa). Active-site residues include serine 707 and lysine 750.

This sequence belongs to the peptidase S16 family. Homohexamer. Organized in a ring with a central cavity.

It localises to the cytoplasm. The enzyme catalyses Hydrolysis of proteins in presence of ATP.. Its function is as follows. ATP-dependent serine protease that mediates the selective degradation of mutant and abnormal proteins as well as certain short-lived regulatory proteins. Required for cellular homeostasis and for survival from DNA damage and developmental changes induced by stress. Degrades polypeptides processively to yield small peptide fragments that are 5 to 10 amino acids long. Binds to DNA in a double-stranded, site-specific manner. The sequence is that of Lon protease from Neorickettsia sennetsu (strain ATCC VR-367 / Miyayama) (Ehrlichia sennetsu).